The chain runs to 803 residues: MKRIFGIFIFLSLLLFLVPLLASCTKEKQVYIVYFGEHKGDKAFHEIEAHHHSYLQSVKETEEDATSSLLYRRASSINGFAAELTPDQASRLKELKEVVSVFKSDPRKYKIHTTRSWEFVGLKEEEGEDYRSDGDAPRHKYDVNDRFRVGRKFLKNAKHGDGVIVGLIDSGVWPESRSFDDKGMGPIPESWKGICQTGVAFNSSHCNRKIIGARYYARGYERYYGPFNAEANKDFLSPRDADGHGSHTASTAVGRRVDGVSALGGIAMGTASGGASLARLAVYKACWAVPNKEKYATNTCFDEDMLAAFDDAIADGVNVISISIGTVEPHTYLEDGIAIGALHAVKRDIVVAASAGNDGPARETLSNPAPWIITVGASSLDRFFVGRLELGDGYVFESDSLTTLKMDNYAPLVYAPDVVVPGVSRNDAMLCLPNALSPDHVRGKVVLCLRGYGSGSTIGKGLEVKRAGGVGMILANSRDNDAFDVESHFVPTALVFSSTVDRILDYIYNTYEPVAFIKPAETVLYRNQPEDSVYPFSSRAPNWVDANILKPDIIAPGLNILAAWSGADSASKDSIDRRVLDYNLDSGTSMSCPHVAGAIALLKSMHPTWSSAAIRSALMTTASMTNEDNEPIQDYDGSPANPFALGSRHFRPTKAASPGLVYDASYQSYLLYCCSVGLTNLDPTFKCPSRIPPGYNLNYPSISIPYLSGTVTVTRTVTCVGRTGNSTSVYVFNAQPPNGVLVKAEPNVLVFDKIGQKKRFNIIFTTQRYEFTGEARRDRYRFGWFSWTDGHHVVRSSIAVSLV.

An N-terminal signal peptide occupies residues 1–22 (MKRIFGIFIFLSLLLFLVPLLA). A propeptide spans 23-112 (SCTKEKQVYI…KSDPRKYKIH (90 aa)) (activation peptide). The 79-residue stretch at 30-108 (VYIVYFGEHK…VSVFKSDPRK (79 aa)) folds into the Inhibitor I9 domain. Residues 140-656 (KYDVNDRFRV…SRHFRPTKAA (517 aa)) form the Peptidase S8 domain. The active-site Charge relay system is aspartate 169. N-linked (GlcNAc...) asparagine glycosylation occurs at asparagine 202. Histidine 244 acts as the Charge relay system in catalysis. The 96-residue stretch at 409–504 (YAPLVYAPDV…VFSSTVDRIL (96 aa)) folds into the PA domain. Serine 589 serves as the catalytic Charge relay system. The N-linked (GlcNAc...) asparagine glycan is linked to asparagine 725.

The protein belongs to the peptidase S8 family.

The protein resides in the secreted. In Arabidopsis thaliana (Mouse-ear cress), this protein is Subtilisin-like protease SBT5.5.